We begin with the raw amino-acid sequence, 282 residues long: E3 ubiquitin-protein ligase SIAH1B (282 aa).

Positions 1–17 (MSRQAATALSTGTSKCP) are enriched in polar residues. The tract at residues 1–23 (MSRQAATALSTGTSKCPPSQRVP) is disordered. Position 19 is a phosphoserine; by ATM and ATR (serine 19). The segment at 41 to 76 (CPVCFDYVLPPILQCQSGHLVCSNCRPKLTCCPTCR) adopts an RING-type zinc-finger fold. Residues 90-282 (VANSVLFPCK…LGINVTISMC (193 aa)) are SBD. Residues 93–153 (SVLFPCKYSA…VMPHLMHQHK (61 aa)) form an SIAH-type zinc finger. Residues cysteine 98, cysteine 105, histidine 117, cysteine 121, cysteine 128, cysteine 135, histidine 147, and histidine 152 each contribute to the Zn(2+) site.

Belongs to the SINA (Seven in absentia) family. As to quaternary structure, homodimer. Post-translationally, phosphorylated on Ser-19 by ATM and ATR. As to expression, widely expressed at low level in embryos and adults. Due to the high similarity between SIAH1A and SIAH1B, it is difficult to distinguish its own tissue specificity. Overexpressed in endothelial cells of adult lung.

The protein resides in the cytoplasm. It localises to the nucleus. It carries out the reaction S-ubiquitinyl-[E2 ubiquitin-conjugating enzyme]-L-cysteine + [acceptor protein]-L-lysine = [E2 ubiquitin-conjugating enzyme]-L-cysteine + N(6)-ubiquitinyl-[acceptor protein]-L-lysine.. The protein operates within protein modification; protein ubiquitination. In terms of biological role, E3 ubiquitin-protein ligase that mediates ubiquitination and subsequent proteasomal degradation of target proteins. E3 ubiquitin ligases accept ubiquitin from an E2 ubiquitin-conjugating enzyme in the form of a thioester and then directly transfers the ubiquitin to targeted substrates. Mediates E3 ubiquitin ligase activity either through direct binding to substrates or by functioning as the essential RING domain subunit of larger E3 complexes. In Mus musculus (Mouse), this protein is E3 ubiquitin-protein ligase SIAH1B (Siah1b).